Consider the following 312-residue polypeptide: Olfactory receptor 5P4 (312 aa).

The Extracellular segment spans residues 1–25 (METENDTMVTEFIILGLTDSATLRA). Asn5 carries N-linked (GlcNAc...) asparagine glycosylation. The chain crosses the membrane as a helical span at residues 26–46 (ILFVFFLPVYIVTVVGNISII). Over 47-54 (LLIRSSPQ) the chain is Cytoplasmic. The chain crosses the membrane as a helical span at residues 55–75 (LHTPMYLFLSHLAFVDIGYST). At 76 to 99 (SVTPIMLISFLREETTIPLAGCAA) the chain is on the extracellular side. A disulfide bond links Cys97 and Cys189. Residues 100–120 (QLGSDVAFGTTECFLLATMAY) traverse the membrane as a helical segment. Over 121–133 (DRYVAICSPLLYS) the chain is Cytoplasmic. The helical transmembrane segment at 134–154 (TQMSPAICCFLLGASYLGGCM) threads the bilayer. The Extracellular portion of the chain corresponds to 155–196 (NASSFTGCFVNLNFCGPNKVNHFFCDLFPLVKLSCGHAYIAE). Residues 197 to 217 (ISPSISSASVLVSTLSTIIVS) traverse the membrane as a helical segment. At 218–237 (YIYILHSILRMRSAEGRNKA) the chain is on the cytoplasmic side. The chain crosses the membrane as a helical span at residues 238-258 (FSTCTSHLTAVTLFYGTVLFV). At 259–271 (YVMPKSSYSADQV) the chain is on the extracellular side. Residues 272–292 (KVASVVYTVVIPMLNPLIYSL) form a helical membrane-spanning segment. The Cytoplasmic segment spans residues 293–312 (RNKEVKEAMKKLMARTHWFP).

The protein belongs to the G-protein coupled receptor 1 family.

Its subcellular location is the cell membrane. Functionally, potential odorant receptor. This Mus musculus (Mouse) protein is Olfactory receptor 5P4.